The primary structure comprises 428 residues: Ribulose bisphosphate carboxylase (428 aa).

Residue Lys151 is the Proton acceptor of the active site. Lys153 serves as a coordination point for substrate. Residues Lys177, Asp179, and Glu180 each coordinate Mg(2+). N6-carboxylysine is present on Lys177. His270 functions as the Proton acceptor in the catalytic mechanism. Substrate is bound by residues Arg271, His303, 354–356, and 376–379; these read SGG and QFGG.

The protein belongs to the RuBisCO large chain family. Type III subfamily. As to quaternary structure, homodimer or homodecamer. In contrast to form I RuBisCO, the form III RuBisCO is composed solely of large subunits. It depends on Mg(2+) as a cofactor.

It catalyses the reaction 2 (2R)-3-phosphoglycerate + 2 H(+) = D-ribulose 1,5-bisphosphate + CO2 + H2O. The catalysed reaction is D-ribulose 1,5-bisphosphate + O2 = 2-phosphoglycolate + (2R)-3-phosphoglycerate + 2 H(+). In terms of biological role, catalyzes the addition of molecular CO(2) and H(2)O to ribulose 1,5-bisphosphate (RuBP), generating two molecules of 3-phosphoglycerate (3-PGA). Functions in an archaeal AMP degradation pathway, together with AMP phosphorylase and R15P isomerase. This chain is Ribulose bisphosphate carboxylase, found in Methanosarcina barkeri (strain Fusaro / DSM 804).